We begin with the raw amino-acid sequence, 385 residues long: Heat-inducible transcription repressor HrcA (385 aa).

Belongs to the HrcA family.

Its function is as follows. Negative regulator of class I heat shock genes (grpE-dnaK-dnaJ and groELS operons). Prevents heat-shock induction of these operons. In Protochlamydia amoebophila (strain UWE25), this protein is Heat-inducible transcription repressor HrcA.